The chain runs to 430 residues: MTAYTPWTGFFSASVAQADPELDRVLRAELSRQQDQIELIASENIVSRAVLEAAGSVLTNKYAEGYPGKRYYGGCEEVDVAEELAIERAKALFGCSYVNVQPHSGAQANGAVMMALVKPGDTIMGMSLAAGGHLTHGAPPAQSGKWFNAVQYGVRLQDASIDFDEVATLAETHKPKLIIAGGSAYPRIIDFAKFREIADRVGALFMVDMAHFAGLVAAGLHPSPLPYADIVTTTTHKTLRGPRGGMVLSNNPDIGKKINSAVFPGLQGGPLMHIIAAKAVAFGEALRPEFKVYAQAVIDNAKALTDALAAGGLNIVSGGTDTHLALVDLRPKALTGNIVEKSLERANITTNKNGIPFDPEKPAITSGIRVGTPAGTTRGFGTAEFTEIGKLIVEVLDGLAANGEDNSQAEAAVREKVAVLCRRFPIYGGL.

(6S)-5,6,7,8-tetrahydrofolate contacts are provided by residues leucine 128 and 132-134 (GHL). Residue lysine 237 is modified to N6-(pyridoxal phosphate)lysine.

This sequence belongs to the SHMT family. In terms of assembly, homodimer. Pyridoxal 5'-phosphate is required as a cofactor.

The protein resides in the cytoplasm. It carries out the reaction (6R)-5,10-methylene-5,6,7,8-tetrahydrofolate + glycine + H2O = (6S)-5,6,7,8-tetrahydrofolate + L-serine. It functions in the pathway one-carbon metabolism; tetrahydrofolate interconversion. Its pathway is amino-acid biosynthesis; glycine biosynthesis; glycine from L-serine: step 1/1. Catalyzes the reversible interconversion of serine and glycine with tetrahydrofolate (THF) serving as the one-carbon carrier. This reaction serves as the major source of one-carbon groups required for the biosynthesis of purines, thymidylate, methionine, and other important biomolecules. Also exhibits THF-independent aldolase activity toward beta-hydroxyamino acids, producing glycine and aldehydes, via a retro-aldol mechanism. The chain is Serine hydroxymethyltransferase 2 from Rhodospirillum rubrum (strain ATCC 11170 / ATH 1.1.1 / DSM 467 / LMG 4362 / NCIMB 8255 / S1).